The primary structure comprises 21 residues: Peptide PGLa-R4 (21 aa).

Leucine 21 carries the post-translational modification Leucine amide.

Expressed by the skin glands.

The protein localises to the secreted. In terms of biological role, antimicrobial peptide. The sequence is that of Peptide PGLa-R4 from Xenopus ruwenzoriensis (Uganda clawed frog).